Consider the following 122-residue polypeptide: uncharacterized protein (122 aa).

The first 22 residues, 1 to 22, serve as a signal peptide directing secretion; it reads MNMMRIFYIGLSGVGMMFSSMA.

This is an uncharacterized protein from Escherichia coli (strain K12).